Consider the following 574-residue polypeptide: Septation ring formation regulator EzrA (574 aa).

The Extracellular segment spans residues 1 to 7 (MSSGIIL). A helical membrane pass occupies residues 8 to 26 (LLVAIVLLVIIAYVVGVVI). Residues 27 to 574 (RKRNDTLIAN…YEKTQERIRF (548 aa)) lie on the Cytoplasmic side of the membrane. Coiled coils occupy residues 104-141 (VRAK…EEKN), 275-343 (LVSL…SAKY), and 473-525 (DIEA…VQKS).

Belongs to the EzrA family.

The protein resides in the cell membrane. Negative regulator of FtsZ ring formation; modulates the frequency and position of FtsZ ring formation. Inhibits FtsZ ring formation at polar sites. Interacts either with FtsZ or with one of its binding partners to promote depolymerization. The chain is Septation ring formation regulator EzrA from Streptococcus agalactiae serotype III (strain NEM316).